The sequence spans 223 residues: MKKSLMALIVVGSFLLSACALRPDTIVNTPLTARPQAASTIAPPANGAIFQAAAYRPMFEDRRARLIGDTITIVINEKSSAGKQAGSAASKTGSVTASAPNVFGLLGSLTNRLSASGSNAIKYEDKGAVTSSNNFISTMTVTVIDVLSNGNLIVAGEKQVSLDKGSEFIRFSGVVDPSTVNSGNIVSSTQVADAKIEYRTNSTVDGAEVASMLARFFLSVLPL.

The first 18 residues, 1 to 18 (MKKSLMALIVVGSFLLSA), serve as a signal peptide directing secretion. The N-palmitoyl cysteine moiety is linked to residue Cys19. Cys19 carries the S-diacylglycerol cysteine lipid modification.

The protein belongs to the FlgH family. The basal body constitutes a major portion of the flagellar organelle and consists of four rings (L,P,S, and M) mounted on a central rod.

Its subcellular location is the cell outer membrane. The protein localises to the bacterial flagellum basal body. Functionally, assembles around the rod to form the L-ring and probably protects the motor/basal body from shearing forces during rotation. The chain is Flagellar L-ring protein from Herminiimonas arsenicoxydans.